A 390-amino-acid chain; its full sequence is Period circadian protein (390 aa).

Disordered stretches follow at residues 27 to 120, 164 to 188, 247 to 266, and 327 to 356; these read VTAP…APPV, LEYS…WEGE, GGNG…STNQ, and SPSG…TSQA. Positions 93–114 are enriched in gly residues; the sequence is GTSGTGNSGDGGGGGGADGTGS. The span at 247–256 shows a compositional bias: gly residues; sequence GGNGNVGSGN.

Forms a heterodimer with timeless (TIM); the complex then translocates into the nucleus. Post-translationally, phosphorylated with a circadian rhythmicity, probably by the double-time protein (dbt). Phosphorylation could be implicated in the stability of per monomer and in the formation of heterodimer per-tim.

The protein resides in the nucleus. It localises to the cytoplasm. Its subcellular location is the perinuclear region. In terms of biological role, essential for biological clock functions. Determines the period length of circadian and ultradian rhythms; an increase in PER dosage leads to shortened circadian rhythms and a decrease leads to lengthened circadian rhythms. Essential for the circadian rhythmicity of locomotor activity, eclosion behavior, and for the rhythmic component of the male courtship song that originates in the thoracic nervous system. The biological cycle depends on the rhythmic formation and nuclear localization of the TIM-PER complex. Light induces the degradation of TIM, which promotes elimination of PER. Nuclear activity of the heterodimer coordinatively regulates PER and TIM transcription through a negative feedback loop. Behaves as a negative element in circadian transcriptional loop. Does not appear to bind DNA, suggesting indirect transcriptional inhibition. This Drosophila tropicalis (Fruit fly) protein is Period circadian protein (per).